Consider the following 95-residue polypeptide: Mitochondrial import inner membrane translocase subunit Tim13 (95 aa).

An N-acetylmethionine modification is found at methionine 1. At serine 7 the chain carries Phosphoserine. Positions 46–69 (CFRKCIGKPGGSLDNSEQKCIAMC) match the Twin CX3C motif motif. Disulfide bonds link cysteine 46–cysteine 69 and cysteine 50–cysteine 65. N6-succinyllysine is present on lysine 53.

The protein belongs to the small Tim family. As to quaternary structure, heterohexamer; composed of 3 copies of TIMM8 (TIMM8A or TIMM8B) and 3 copies of TIMM13, named soluble 70 kDa complex. Associates with the TIM22 complex, whose core is composed of TIMM22. As to expression, ubiquitous, with highest expression in heart, kidney, liver and skeletal muscle.

The protein resides in the mitochondrion inner membrane. In terms of biological role, mitochondrial intermembrane chaperone that participates in the import and insertion of some multi-pass transmembrane proteins into the mitochondrial inner membrane. Also required for the transfer of beta-barrel precursors from the TOM complex to the sorting and assembly machinery (SAM complex) of the outer membrane. Acts as a chaperone-like protein that protects the hydrophobic precursors from aggregation and guide them through the mitochondrial intermembrane space. The TIMM8-TIMM13 complex mediates the import of proteins such as TIMM23, SLC25A12/ARALAR1 and SLC25A13/ARALAR2, while the predominant TIMM9-TIMM10 70 kDa complex mediates the import of much more proteins. This Homo sapiens (Human) protein is Mitochondrial import inner membrane translocase subunit Tim13 (TIMM13).